Consider the following 62-residue polypeptide: Large ribosomal subunit protein uL30 (62 aa).

It belongs to the universal ribosomal protein uL30 family. In terms of assembly, part of the 50S ribosomal subunit.

This Beutenbergia cavernae (strain ATCC BAA-8 / DSM 12333 / CCUG 43141 / JCM 11478 / NBRC 16432 / NCIMB 13614 / HKI 0122) protein is Large ribosomal subunit protein uL30.